The chain runs to 266 residues: Phosphate import ATP-binding protein PstB 1 (266 aa).

One can recognise an ABC transporter domain in the interval 21 to 261; it reads ISTQDLSVFY…PKGEITEDYI (241 aa). 54–61 is a binding site for ATP; that stretch reads GGSGSGKS.

It belongs to the ABC transporter superfamily. Phosphate importer (TC 3.A.1.7) family. As to quaternary structure, the complex is composed of two ATP-binding proteins (PstB), two transmembrane proteins (PstC and PstA) and a solute-binding protein (PstS).

The protein localises to the cell membrane. The catalysed reaction is phosphate(out) + ATP + H2O = ADP + 2 phosphate(in) + H(+). In terms of biological role, part of the ABC transporter complex PstSACB involved in phosphate import. Responsible for energy coupling to the transport system. The chain is Phosphate import ATP-binding protein PstB 1 from Lactobacillus johnsonii (strain CNCM I-12250 / La1 / NCC 533).